We begin with the raw amino-acid sequence, 563 residues long: Arginine--tRNA ligase (563 aa).

The short motif at 120 to 130 (PNIAKPFHVGH) is the 'HIGH' region element.

It belongs to the class-I aminoacyl-tRNA synthetase family. Monomer.

It is found in the cytoplasm. The enzyme catalyses tRNA(Arg) + L-arginine + ATP = L-arginyl-tRNA(Arg) + AMP + diphosphate. This is Arginine--tRNA ligase from Clostridium beijerinckii (strain ATCC 51743 / NCIMB 8052) (Clostridium acetobutylicum).